Reading from the N-terminus, the 253-residue chain is MALPDFSMRQLLEAGVHFGHQTHRWNPKMEPFLFGDRNNIHIIDLAQTVPLLHQALVTVRDVVAGGGRVLFVGTKRQASDPVAAAARQCAQYYINHRWLGGMLTNWKTISNSIRRLRQLDEMLAGEAKGLTKKEVLNLTRERDKLERAIGGIKDMGGLPDLIFVIDTNKEEIAIQEARKLGIAVVAILDSNSNPDGIAFPVPGNDDAARAISLYCDLVSRAVIDGISQSQSASGVDVGAEAEPAVEIPAAAEA.

It belongs to the universal ribosomal protein uS2 family.

The protein is Small ribosomal subunit protein uS2 of Parvibaculum lavamentivorans (strain DS-1 / DSM 13023 / NCIMB 13966).